Reading from the N-terminus, the 307-residue chain is D-alanine--D-alanine ligase (307 aa).

The region spanning 108–301 (KEVFAAAGLP…FPEFCAWLVE (194 aa)) is the ATP-grasp domain. ATP is bound at residue 135–185 (LPPPYVVKPNAEGSSVGVYIVHEDANGPPQLAADMPQDLMVETYVPGRELT). The Mg(2+) site is built by D252, E268, and N270.

It belongs to the D-alanine--D-alanine ligase family. It depends on Mg(2+) as a cofactor. Mn(2+) is required as a cofactor.

The protein localises to the cytoplasm. It carries out the reaction 2 D-alanine + ATP = D-alanyl-D-alanine + ADP + phosphate + H(+). The protein operates within cell wall biogenesis; peptidoglycan biosynthesis. In terms of biological role, cell wall formation. The chain is D-alanine--D-alanine ligase from Cereibacter sphaeroides (strain ATCC 17029 / ATH 2.4.9) (Rhodobacter sphaeroides).